A 478-amino-acid polypeptide reads, in one-letter code: Catalase easC (478 aa).

The active site involves H54. Residue Y343 participates in heme binding. The segment at 459–478 (VAEKARPDSPSRAQPGQLRL) is disordered.

Belongs to the catalase family. Heme is required as a cofactor.

The protein operates within alkaloid biosynthesis; ergot alkaloid biosynthesis. In terms of biological role, catalase; part of the gene cluster that mediates the biosynthesis of fungal ergot alkaloid. DmaW catalyzes the first step of ergot alkaloid biosynthesis by condensing dimethylallyl diphosphate (DMAP) and tryptophan to form 4-dimethylallyl-L-tryptophan. The second step is catalyzed by the methyltransferase easF that methylates 4-dimethylallyl-L-tryptophan in the presence of S-adenosyl-L-methionine, resulting in the formation of 4-dimethylallyl-L-abrine. The catalase easC and the FAD-dependent oxidoreductase easE then transform 4-dimethylallyl-L-abrine to chanoclavine-I which is further oxidized by easD in the presence of NAD(+), resulting in the formation of chanoclavine-I aldehyde. Chanoclavine-I aldehyde is the precursor of ergoamides and ergopeptines in Clavicipitaceae, and clavine-type alcaloids such as fumiclavine in Trichocomaceae. However, the metabolites downstream of chanoclavine-I aldehyde in Arthrodermataceae have not been identified yet. The chain is Catalase easC from Trichophyton verrucosum (strain HKI 0517).